The chain runs to 205 residues: High frequency lysogenization protein HflD homolog (205 aa).

The protein belongs to the HflD family.

It is found in the cytoplasm. The protein resides in the cell inner membrane. The protein is High frequency lysogenization protein HflD homolog of Shewanella baltica (strain OS185).